A 429-amino-acid polypeptide reads, in one-letter code: Saccharopine dehydrogenase-like oxidoreductase (429 aa).

Alanine 2 is subject to N-acetylalanine. A phosphoserine mark is found at serine 209, serine 215, and serine 217.

The protein belongs to the saccharopine dehydrogenase family.

This Mus musculus (Mouse) protein is Saccharopine dehydrogenase-like oxidoreductase (Sccpdh).